Reading from the N-terminus, the 74-residue chain is Protein F9 homolog (74 aa).

The Virion surface segment spans residues 1–34 (GHAAANCALARVATALTRRVPASRHGLAEGGTPP). Residues 35–55 (WTLLLAVAAVAVLGVVAISLL) traverse the membrane as a helical segment. Over 56–73 (RRALRIRFRYSKSIQTLR) the chain is Intravirion.

It belongs to the chordopoxvirinae L1 protein family.

Its subcellular location is the virion membrane. This chain is Protein F9 homolog, found in Capra hircus (Goat).